Reading from the N-terminus, the 113-residue chain is Cell cycle protein GpsB (113 aa).

Residues 36–68 (LDMVIKDYSTFTQEIEALQAENIRLVQELDNAP) adopt a coiled-coil conformation.

It belongs to the GpsB family. In terms of assembly, forms polymers through the coiled coil domains. Interacts with PBP1, MreC and EzrA.

It is found in the cytoplasm. In terms of biological role, divisome component that associates with the complex late in its assembly, after the Z-ring is formed, and is dependent on DivIC and PBP2B for its recruitment to the divisome. Together with EzrA, is a key component of the system that regulates PBP1 localization during cell cycle progression. Its main role could be the removal of PBP1 from the cell pole after pole maturation is completed. Also contributes to the recruitment of PBP1 to the division complex. Not essential for septum formation. This Listeria innocua serovar 6a (strain ATCC BAA-680 / CLIP 11262) protein is Cell cycle protein GpsB.